Here is a 305-residue protein sequence, read N- to C-terminus: Phosphoribosylaminoimidazole-succinocarboxamide synthase (305 aa).

The protein belongs to the SAICAR synthetase family.

The enzyme catalyses 5-amino-1-(5-phospho-D-ribosyl)imidazole-4-carboxylate + L-aspartate + ATP = (2S)-2-[5-amino-1-(5-phospho-beta-D-ribosyl)imidazole-4-carboxamido]succinate + ADP + phosphate + 2 H(+). The protein operates within purine metabolism; IMP biosynthesis via de novo pathway; 5-amino-1-(5-phospho-D-ribosyl)imidazole-4-carboxamide from 5-amino-1-(5-phospho-D-ribosyl)imidazole-4-carboxylate: step 1/2. This Tropheryma whipplei (strain TW08/27) (Whipple's bacillus) protein is Phosphoribosylaminoimidazole-succinocarboxamide synthase.